The chain runs to 1239 residues: Inner tegument protein (1239 aa).

Residues 1 to 10 (MASAMESDSS) are compositionally biased toward low complexity. Disordered regions lie at residues 1–20 (MASA…DAQP), 672–708 (GESP…GGPW), and 1090–1239 (GRNA…AEDE). The interval 618–1239 (NELPKTRSLA…RPPRPTAEDE (622 aa)) is interaction with large tegument protein. Positions 1115-1126 (DSSPFSFSSSDF) are enriched in low complexity. The span at 1127–1136 (SDQDEGEGGE) shows a compositional bias: acidic residues. Residues 1181–1190 (RTTPSPSRRA) are compositionally biased toward low complexity. Residues 1219-1232 (VRPRTRRGATRRPP) show a composition bias toward basic residues.

Belongs to the herpesviridae inner tegument protein family. As to quaternary structure, interacts (via C-terminus) with the large tegument protein/LTP (via N-terminus).

Its subcellular location is the virion tegument. It is found in the host cytoplasm. The protein resides in the host nucleus. It localises to the host Golgi apparatus. The protein localises to the host trans-Golgi network. Its function is as follows. Plays an essential role in cytoplasmic secondary envelopment during viral egress. Interacts with the capsid via the large tegument protein/LTP and participates in its transport to the host trans-Golgi network (TGN) where secondary envelopment occurs. Modulates tegumentation and capsid accumulation at the viral assembly complex. The protein is Inner tegument protein of Homo sapiens (Human).